Consider the following 258-residue polypeptide: Acyl-[acyl-carrier-protein]--UDP-N-acetylglucosamine O-acyltransferase (258 aa).

This sequence belongs to the transferase hexapeptide repeat family. LpxA subfamily. Homotrimer.

The protein resides in the cytoplasm. It catalyses the reaction a (3R)-hydroxyacyl-[ACP] + UDP-N-acetyl-alpha-D-glucosamine = a UDP-3-O-[(3R)-3-hydroxyacyl]-N-acetyl-alpha-D-glucosamine + holo-[ACP]. Its pathway is glycolipid biosynthesis; lipid IV(A) biosynthesis; lipid IV(A) from (3R)-3-hydroxytetradecanoyl-[acyl-carrier-protein] and UDP-N-acetyl-alpha-D-glucosamine: step 1/6. Involved in the biosynthesis of lipid A, a phosphorylated glycolipid that anchors the lipopolysaccharide to the outer membrane of the cell. This chain is Acyl-[acyl-carrier-protein]--UDP-N-acetylglucosamine O-acyltransferase, found in Pseudomonas syringae pv. syringae (strain B728a).